A 530-amino-acid polypeptide reads, in one-letter code: Histone-arginine methyltransferase CARMER (530 aa).

In terms of domain architecture, SAM-dependent MTase PRMT-type spans Ala141–His450. Positions 154, 163, 187, 209, 238, and 266 each coordinate S-adenosyl-L-methionine. At Arg501 the chain carries Asymmetric dimethylarginine; by autocatalysis.

It belongs to the class I-like SAM-binding methyltransferase superfamily. Protein arginine N-methyltransferase family. As to quaternary structure, homodimer. In terms of processing, the dimethylated protein is the major form.

The protein localises to the cytoplasm. Its subcellular location is the nucleus. It catalyses the reaction L-arginyl-[protein] + 2 S-adenosyl-L-methionine = N(omega),N(omega)-dimethyl-L-arginyl-[protein] + 2 S-adenosyl-L-homocysteine + 2 H(+). Its function is as follows. Methylates (mono- and asymmetric dimethylation) the guanidino nitrogens of arginyl residues in proteins. May methylate histone H3 at 'Arg-17' and activate transcription via chromatin remodeling. This chain is Histone-arginine methyltransferase CARMER (Art4), found in Drosophila simulans (Fruit fly).